The sequence spans 271 residues: Cyclic AMP-dependent transcription factor ATF-1 (271 aa).

The tract at residues 1 to 61 is disordered; that stretch reads MEDSHKSTTS…QKAHGILARR (61 aa). One can recognise a KID domain in the interval 31–90; it reads QVSSLSESEESQDSSDSIGSSQKAHGILARRPSYRKILKDLSSEDTRGRKGDGENSGVSA. The residue at position 63 (S63) is a Phosphoserine; by CaMK1, CDK3, RPS6KA4 and RPS6KA5. S198 carries the post-translational modification Phosphoserine; by HIPK2. Glycyl lysine isopeptide (Lys-Gly) (interchain with G-Cter in SUMO2) cross-links involve residues K208 and K215. Positions 213–271 constitute a bZIP domain; sequence QLKREIRLMKNREAARECRRKKKEYVKCLENRVAVLENQNKTLIEELKTLKDLYSNKSV. Positions 215–239 are basic motif; that stretch reads KREIRLMKNREAARECRRKKKEYVK. The leucine-zipper stretch occupies residues 241-262; that stretch reads LENRVAVLENQNKTLIEELKTL.

It belongs to the bZIP family. ATF subfamily. As to quaternary structure, binds DNA as a dimer. Interacts with HIPK2 and CDK3. Interacts with MOTS-c, a peptide produced by the mitochondrially encoded 12S rRNA MT-RNR1; the interaction occurs in the nucleus following metabolic stress. In terms of processing, phosphorylated at Ser-198 by HIPK2 in response to genotoxic stress. This phosphorylation promotes transcription repression of FTH1 and other antioxidant detoxification genes. The CDK3-mediated phosphorylation at Ser-63 promotes its transactivation and transcriptional activities. Phosphorylated at Ser-63 by RPS6KA4 and RPS6KA5 in response to mitogenic or stress stimuli.

It localises to the nucleus. Functionally, this protein binds the cAMP response element (CRE) (consensus: 5'-GTGACGT[AC][AG]-3'), a sequence present in many viral and cellular promoters. Binds to the Tax-responsive element (TRE) of HTLV-I. Mediates PKA-induced stimulation of CRE-reporter genes. Represses the expression of FTH1 and other antioxidant detoxification genes. Triggers cell proliferation and transformation. The sequence is that of Cyclic AMP-dependent transcription factor ATF-1 (ATF1) from Homo sapiens (Human).